The primary structure comprises 359 residues: MSQPNSILMSYGWDPSIYLEEPKLLEGLKPGRVLAVYGEYSKIIIEQGEKKGIFSGALMASGESIVTGDWVLIREIEGDELCIVEKILPRKTFLRRSNPGKRKGSQAIASNIDLLLVIMGLDNDYSPRRIERYLFLAKVSGAQVTIVLNKKDLCMDPENKFMEIKTIAGETPIEMISALDLKQTRTILQWIDPGKTITFLGSSGAGKSTIINSLLGGEIQKTNEVKVSDGTGKHTTTRRELFLLPSGGVLMDNPGIREVGLFSEGSEDELEEVFPEIAVAAEECRFNDCSHNEEPNCGVVAAVKDGRISEARYFSYLKLSKELMAYQALNDPEEARKKKQKDKQMSKALQKRLKDKGRK.

One can recognise a CP-type G domain in the interval 101–259 (KRKGSQAIAS…LMDNPGIREV (159 aa)). GTP-binding positions include 149-152 (NKKD) and 201-209 (GSSGAGKST). Cysteine 284, cysteine 289, histidine 291, and cysteine 297 together coordinate Zn(2+). The interval 331–359 (DPEEARKKKQKDKQMSKALQKRLKDKGRK) is disordered. Residues 349-359 (LQKRLKDKGRK) are compositionally biased toward basic residues.

The protein belongs to the TRAFAC class YlqF/YawG GTPase family. RsgA subfamily. Monomer. Associates with 30S ribosomal subunit, binds 16S rRNA. Requires Zn(2+) as cofactor.

The protein resides in the cytoplasm. In terms of biological role, one of several proteins that assist in the late maturation steps of the functional core of the 30S ribosomal subunit. Helps release RbfA from mature subunits. May play a role in the assembly of ribosomal proteins into the subunit. Circularly permuted GTPase that catalyzes slow GTP hydrolysis, GTPase activity is stimulated by the 30S ribosomal subunit. The protein is Small ribosomal subunit biogenesis GTPase RsgA of Leptospira interrogans serogroup Icterohaemorrhagiae serovar Lai (strain 56601).